Consider the following 150-residue polypeptide: Cytochrome b5 type B (150 aa).

The propeptide occupies Met-1–Gly-15. Residues Met-1–Glu-21 form a disordered region. Phosphoserine is present on Ser-23. Positions Val-24–His-100 constitute a Cytochrome b5 heme-binding domain. Lys-34 carries the post-translational modification N6-acetyllysine. Ser-37 carries the phosphoserine modification. Lys-39 bears the N6-methyllysine mark. Heme is bound by residues His-59 and His-83. Ser-84 carries the post-translational modification Phosphoserine. The chain crosses the membrane as a helical span at residues Cys-122–Thr-144.

It belongs to the cytochrome b5 family. Component of a complex composed of cytochrome b5, NADH-cytochrome b5 reductase (CYB5R3) and MTARC2.

It localises to the mitochondrion outer membrane. Functionally, cytochrome b5 is a membrane-bound hemoprotein functioning as an electron carrier for several membrane-bound oxygenases. The polypeptide is Cytochrome b5 type B (CYB5B) (Pongo abelii (Sumatran orangutan)).